Here is a 312-residue protein sequence, read N- to C-terminus: Methionyl-tRNA formyltransferase (312 aa).

Residue Ser117–Pro120 coordinates (6S)-5,6,7,8-tetrahydrofolate.

It belongs to the Fmt family.

The catalysed reaction is L-methionyl-tRNA(fMet) + (6R)-10-formyltetrahydrofolate = N-formyl-L-methionyl-tRNA(fMet) + (6S)-5,6,7,8-tetrahydrofolate + H(+). In terms of biological role, attaches a formyl group to the free amino group of methionyl-tRNA(fMet). The formyl group appears to play a dual role in the initiator identity of N-formylmethionyl-tRNA by promoting its recognition by IF2 and preventing the misappropriation of this tRNA by the elongation apparatus. The protein is Methionyl-tRNA formyltransferase of Bordetella bronchiseptica (strain ATCC BAA-588 / NCTC 13252 / RB50) (Alcaligenes bronchisepticus).